We begin with the raw amino-acid sequence, 199 residues long: Holliday junction branch migration complex subunit RuvA (199 aa).

Residues 1-63 form a domain I region; the sequence is MIGCLIGEVF…EDAQQLYGFS (63 aa). A domain II region spans residues 64–142; it reads DAQEKTIFRT…TLAQGTSSAA (79 aa). Positions 143-150 are flexible linker; sequence ALPQIQFV. The interval 150 to 199 is domain III; sequence VSNSPVAEAEAALQSLGYKPLEAQKAVAAVKADYTESADIIRAALKSMMK.

Belongs to the RuvA family. Homotetramer. Forms an RuvA(8)-RuvB(12)-Holliday junction (HJ) complex. HJ DNA is sandwiched between 2 RuvA tetramers; dsDNA enters through RuvA and exits via RuvB. An RuvB hexamer assembles on each DNA strand where it exits the tetramer. Each RuvB hexamer is contacted by two RuvA subunits (via domain III) on 2 adjacent RuvB subunits; this complex drives branch migration. In the full resolvosome a probable DNA-RuvA(4)-RuvB(12)-RuvC(2) complex forms which resolves the HJ.

Its subcellular location is the cytoplasm. In terms of biological role, the RuvA-RuvB-RuvC complex processes Holliday junction (HJ) DNA during genetic recombination and DNA repair, while the RuvA-RuvB complex plays an important role in the rescue of blocked DNA replication forks via replication fork reversal (RFR). RuvA specifically binds to HJ cruciform DNA, conferring on it an open structure. The RuvB hexamer acts as an ATP-dependent pump, pulling dsDNA into and through the RuvAB complex. HJ branch migration allows RuvC to scan DNA until it finds its consensus sequence, where it cleaves and resolves the cruciform DNA. This is Holliday junction branch migration complex subunit RuvA from Acinetobacter baumannii (strain SDF).